A 215-amino-acid chain; its full sequence is uncharacterized protein (215 aa).

This is an uncharacterized protein from Acanthamoeba polyphaga mimivirus (APMV).